The primary structure comprises 539 residues: MADTKYIFVTGGVVSSLGKGIVAASLGKLLQARGFNVALQKFDPYINIDPGTLNPYEHGECYVTEDGHEADLDLGHYERFLNTPTTRANNITTGRIYQNVIRKERKGEYLGKTVQVVPHITDEIKRNVKLLGQKSQYDFVITEIGGTVGDIESLPFLESVRQLKWELGQNCLCVHLTYVPYIAAAGEVKTKPTQHSVKQLQEVGIQPDILVLRTEHELQPDILKKVALFCNVAPDSVVQSVDVPTIYEVPLVLQQQHMDETVLRKVGLQVGPVPEMRQWHEFLEMKHTAQETVTIALVGKYVELQDAYKSIDESLMQAAIYNRKKLNLISVHSEKVTEANVAETLKDMDGIVIAPGFGSRGVEGKLVALKYARENDLPTLGICLGMQCMVIEYARNVLGFKDANTTEIESNIEHKVIDLMDEQKTVTDMGGSMRLGAYDCALRKGSKLAAAYGKEFVRERHRHRFEFNSQYREAFEKAGMQCVGENPETGLVEAVEVPACRWFVGVQFHPEYNSTVVNPNPLFMAFIREAIKTRKKDKE.

An amidoligase domain region spans residues 1–268 (MADTKYIFVT…DETVLRKVGL (268 aa)). Serine 15 contacts CTP. Serine 15 serves as a coordination point for UTP. 16 to 21 (SLGKGI) contributes to the ATP binding site. L-glutamine is bound at residue tyrosine 56. An ATP-binding site is contributed by aspartate 73. 2 residues coordinate Mg(2+): aspartate 73 and glutamate 143. CTP is bound by residues 150–152 (DIE), 189–194 (KTKPTQ), and lysine 225. UTP contacts are provided by residues 189–194 (KTKPTQ) and lysine 225. The Glutamine amidotransferase type-1 domain occupies 294-536 (TIALVGKYVE…IREAIKTRKK (243 aa)). Position 356 (glycine 356) interacts with L-glutamine. The active-site Nucleophile; for glutamine hydrolysis is the cysteine 383. L-glutamine contacts are provided by residues 384–387 (LGMQ), glutamate 407, and arginine 464. Residues histidine 509 and glutamate 511 contribute to the active site.

It belongs to the CTP synthase family. In terms of assembly, homotetramer.

It carries out the reaction UTP + L-glutamine + ATP + H2O = CTP + L-glutamate + ADP + phosphate + 2 H(+). The enzyme catalyses L-glutamine + H2O = L-glutamate + NH4(+). The catalysed reaction is UTP + NH4(+) + ATP = CTP + ADP + phosphate + 2 H(+). It participates in pyrimidine metabolism; CTP biosynthesis via de novo pathway; CTP from UDP: step 2/2. Its activity is regulated as follows. Allosterically activated by GTP, when glutamine is the substrate; GTP has no effect on the reaction when ammonia is the substrate. The allosteric effector GTP functions by stabilizing the protein conformation that binds the tetrahedral intermediate(s) formed during glutamine hydrolysis. Inhibited by the product CTP, via allosteric rather than competitive inhibition. In terms of biological role, catalyzes the ATP-dependent amination of UTP to CTP with either L-glutamine or ammonia as the source of nitrogen. Regulates intracellular CTP levels through interactions with the four ribonucleotide triphosphates. The protein is CTP synthase of Porphyromonas gingivalis (strain ATCC 33277 / DSM 20709 / CIP 103683 / JCM 12257 / NCTC 11834 / 2561).